The sequence spans 268 residues: Hemin import ATP-binding protein HmuV (268 aa).

The 237-residue stretch at 5 to 241 (LKAEAASFAL…ELIADVFDVA (237 aa)) folds into the ABC transporter domain. Position 37-44 (37-44 (GPNGAGKS)) interacts with ATP.

This sequence belongs to the ABC transporter superfamily. Heme (hemin) importer (TC 3.A.1.14.5) family. As to quaternary structure, the complex is composed of two ATP-binding proteins (HmuV), two transmembrane proteins (HmuU) and a solute-binding protein (HmuT).

It is found in the cell inner membrane. In terms of biological role, part of the ABC transporter complex HmuTUV involved in hemin import. Responsible for energy coupling to the transport system. The chain is Hemin import ATP-binding protein HmuV from Rhodopseudomonas palustris (strain ATCC BAA-98 / CGA009).